A 58-amino-acid polypeptide reads, in one-letter code: Large ribosomal subunit protein bL32 (58 aa).

Positions 1–24 are disordered; that stretch reads MAVPKKKTSKSKRDKRKATWKRKA.

Belongs to the bacterial ribosomal protein bL32 family.

This Synechococcus sp. (strain ATCC 27144 / PCC 6301 / SAUG 1402/1) (Anacystis nidulans) protein is Large ribosomal subunit protein bL32.